The sequence spans 498 residues: Probable cytosol aminopeptidase (498 aa).

Positions 264 and 269 each coordinate Mn(2+). Lysine 276 is an active-site residue. The Mn(2+) site is built by aspartate 287, aspartate 346, and glutamate 348. Arginine 350 is a catalytic residue.

The protein belongs to the peptidase M17 family. Mn(2+) is required as a cofactor.

The protein resides in the cytoplasm. The enzyme catalyses Release of an N-terminal amino acid, Xaa-|-Yaa-, in which Xaa is preferably Leu, but may be other amino acids including Pro although not Arg or Lys, and Yaa may be Pro. Amino acid amides and methyl esters are also readily hydrolyzed, but rates on arylamides are exceedingly low.. The catalysed reaction is Release of an N-terminal amino acid, preferentially leucine, but not glutamic or aspartic acids.. Its function is as follows. Presumably involved in the processing and regular turnover of intracellular proteins. Catalyzes the removal of unsubstituted N-terminal amino acids from various peptides. This chain is Probable cytosol aminopeptidase, found in Rhizobium rhizogenes (strain K84 / ATCC BAA-868) (Agrobacterium radiobacter).